The following is a 241-amino-acid chain: Lipoprotein MxiJ (241 aa).

The first 17 residues, 1 to 17 (MIRYKGFILFLLLMLIG), serve as a signal peptide directing secretion. Cys-18 carries the N-palmitoyl cysteine lipid modification. Residue Cys-18 is the site of S-diacylglycerol cysteine attachment.

This sequence belongs to the YscJ lipoprotein family.

It is found in the cell outer membrane. In terms of biological role, involved in the secretion of the Ipa antigens. This is Lipoprotein MxiJ (mxiJ) from Shigella sonnei.